A 291-amino-acid polypeptide reads, in one-letter code: Acetyl-coenzyme A carboxylase carboxyl transferase subunit beta (291 aa).

Residues 34 to 291 enclose the CoA carboxyltransferase N-terminal domain; that stretch reads MWTKCSNCNN…LILHGVNKYE (258 aa). Residues cysteine 38, cysteine 41, cysteine 57, and cysteine 60 each contribute to the Zn(2+) site. Residues 38–60 form a C4-type zinc finger; the sequence is CSNCNNMIYYEDLENNKYVCTKC.

Belongs to the AccD/PCCB family. In terms of assembly, acetyl-CoA carboxylase is a heterohexamer composed of biotin carboxyl carrier protein (AccB), biotin carboxylase (AccC) and two subunits each of ACCase subunit alpha (AccA) and ACCase subunit beta (AccD). Requires Zn(2+) as cofactor.

Its subcellular location is the cytoplasm. The enzyme catalyses N(6)-carboxybiotinyl-L-lysyl-[protein] + acetyl-CoA = N(6)-biotinyl-L-lysyl-[protein] + malonyl-CoA. The protein operates within lipid metabolism; malonyl-CoA biosynthesis; malonyl-CoA from acetyl-CoA: step 1/1. Component of the acetyl coenzyme A carboxylase (ACC) complex. Biotin carboxylase (BC) catalyzes the carboxylation of biotin on its carrier protein (BCCP) and then the CO(2) group is transferred by the transcarboxylase to acetyl-CoA to form malonyl-CoA. This chain is Acetyl-coenzyme A carboxylase carboxyl transferase subunit beta, found in Clostridium botulinum (strain Eklund 17B / Type B).